Reading from the N-terminus, the 248-residue chain is Triosephosphate isomerase (248 aa).

Substrate is bound by residues asparagine 10 and lysine 12. The active-site Electrophile is histidine 95. Residue glutamate 165 is the Proton acceptor of the active site.

The protein belongs to the triosephosphate isomerase family. Homodimer.

The catalysed reaction is D-glyceraldehyde 3-phosphate = dihydroxyacetone phosphate. Its pathway is carbohydrate biosynthesis; gluconeogenesis. It participates in carbohydrate degradation; glycolysis; D-glyceraldehyde 3-phosphate from glycerone phosphate: step 1/1. The protein is Triosephosphate isomerase (TPI1) of Kluyveromyces marxianus (Yeast).